Consider the following 346-residue polypeptide: tRNA-specific 2-thiouridylase MnmA (346 aa).

6–13 contacts ATP; the sequence is AMSGGTDS. Residue cysteine 90 is the Nucleophile of the active site. Cysteines 90 and 187 form a disulfide. Position 114 (glycine 114) interacts with ATP. Residues 137–139 are interaction with tRNA; the sequence is KDQ. Catalysis depends on cysteine 187, which acts as the Cysteine persulfide intermediate. The interaction with tRNA stretch occupies residues 292-293; sequence RY.

Belongs to the MnmA/TRMU family.

The protein resides in the cytoplasm. It catalyses the reaction S-sulfanyl-L-cysteinyl-[protein] + uridine(34) in tRNA + AH2 + ATP = 2-thiouridine(34) in tRNA + L-cysteinyl-[protein] + A + AMP + diphosphate + H(+). Catalyzes the 2-thiolation of uridine at the wobble position (U34) of tRNA, leading to the formation of s(2)U34. In Nitratidesulfovibrio vulgaris (strain ATCC 29579 / DSM 644 / CCUG 34227 / NCIMB 8303 / VKM B-1760 / Hildenborough) (Desulfovibrio vulgaris), this protein is tRNA-specific 2-thiouridylase MnmA.